The chain runs to 619 residues: 1-deoxy-D-xylulose-5-phosphate synthase (619 aa).

Thiamine diphosphate contacts are provided by residues histidine 63 and 104–106 (GHS). Position 136 (aspartate 136) interacts with Mg(2+). Thiamine diphosphate contacts are provided by residues 137-138 (GS), asparagine 165, tyrosine 272, and glutamate 353. Asparagine 165 provides a ligand contact to Mg(2+).

It belongs to the transketolase family. DXPS subfamily. In terms of assembly, homodimer. Mg(2+) is required as a cofactor. The cofactor is thiamine diphosphate.

The catalysed reaction is D-glyceraldehyde 3-phosphate + pyruvate + H(+) = 1-deoxy-D-xylulose 5-phosphate + CO2. Its pathway is metabolic intermediate biosynthesis; 1-deoxy-D-xylulose 5-phosphate biosynthesis; 1-deoxy-D-xylulose 5-phosphate from D-glyceraldehyde 3-phosphate and pyruvate: step 1/1. Functionally, catalyzes the acyloin condensation reaction between C atoms 2 and 3 of pyruvate and glyceraldehyde 3-phosphate to yield 1-deoxy-D-xylulose-5-phosphate (DXP). This Wolinella succinogenes (strain ATCC 29543 / DSM 1740 / CCUG 13145 / JCM 31913 / LMG 7466 / NCTC 11488 / FDC 602W) (Vibrio succinogenes) protein is 1-deoxy-D-xylulose-5-phosphate synthase.